The following is an 873-amino-acid chain: DNA mismatch repair protein MutS (873 aa).

An ATP-binding site is contributed by 625–632 (GPNMGGKS).

This sequence belongs to the DNA mismatch repair MutS family.

Functionally, this protein is involved in the repair of mismatches in DNA. It is possible that it carries out the mismatch recognition step. This protein has a weak ATPase activity. The chain is DNA mismatch repair protein MutS from Xanthomonas campestris pv. campestris (strain 8004).